The sequence spans 327 residues: tRNA-dihydrouridine(20/20a) synthase (327 aa).

FMN is bound by residues 17–19 (PML) and Gln-69. The active-site Proton donor is Cys-99. FMN is bound by residues Lys-138, His-170, 210–212 (NGG), and 232–233 (GR).

Belongs to the Dus family. DusA subfamily. It depends on FMN as a cofactor.

It carries out the reaction 5,6-dihydrouridine(20) in tRNA + NADP(+) = uridine(20) in tRNA + NADPH + H(+). The catalysed reaction is 5,6-dihydrouridine(20) in tRNA + NAD(+) = uridine(20) in tRNA + NADH + H(+). It catalyses the reaction 5,6-dihydrouridine(20a) in tRNA + NADP(+) = uridine(20a) in tRNA + NADPH + H(+). The enzyme catalyses 5,6-dihydrouridine(20a) in tRNA + NAD(+) = uridine(20a) in tRNA + NADH + H(+). Functionally, catalyzes the synthesis of 5,6-dihydrouridine (D), a modified base found in the D-loop of most tRNAs, via the reduction of the C5-C6 double bond in target uridines. Specifically modifies U20 and U20a in tRNAs. The polypeptide is tRNA-dihydrouridine(20/20a) synthase (Pasteurella multocida (strain Pm70)).